The following is a 489-amino-acid chain: Probable anthranilate synthase component 1 (489 aa).

L-tryptophan contacts are provided by residues Ser54 and 262–264 (PYM). Chorismate is bound at residue 297–298 (GT). Position 324 (Glu324) interacts with Mg(2+). A phosphoserine mark is found at Ser390 and Ser392. Residues Tyr412, Arg433, 447–449 (GGG), and Gly449 contribute to the chorismate site. Glu462 is a binding site for Mg(2+). The residue at position 488 (Ser488) is a Phosphoserine.

Belongs to the anthranilate synthase component I family. Tetramer of two components I and two components II. The cofactor is Mg(2+).

It carries out the reaction chorismate + L-glutamine = anthranilate + pyruvate + L-glutamate + H(+). The protein operates within amino-acid biosynthesis; L-tryptophan biosynthesis; L-tryptophan from chorismate: step 1/5. The protein is Probable anthranilate synthase component 1 (trp3) of Schizosaccharomyces pombe (strain 972 / ATCC 24843) (Fission yeast).